The following is a 478-amino-acid chain: UDP-glycosyltransferase 90A1 (478 aa).

UDP-alpha-D-glucose is bound by residues threonine 289, 343–345 (VDQ), 360–368 (HCGWNSAQE), and 382–385 (MAEQ).

It belongs to the UDP-glycosyltransferase family.

This Arabidopsis thaliana (Mouse-ear cress) protein is UDP-glycosyltransferase 90A1 (UGT90A1).